The following is a 306-amino-acid chain: tRNA pseudouridine synthase B (306 aa).

Asp-48 (nucleophile) is an active-site residue.

It belongs to the pseudouridine synthase TruB family. Type 1 subfamily.

It carries out the reaction uridine(55) in tRNA = pseudouridine(55) in tRNA. Its function is as follows. Responsible for synthesis of pseudouridine from uracil-55 in the psi GC loop of transfer RNAs. In Haemophilus influenzae (strain PittEE), this protein is tRNA pseudouridine synthase B.